Reading from the N-terminus, the 132-residue chain is UPF0299 membrane protein YohJ (132 aa).

The next 4 helical transmembrane spans lie at 7 to 27 (IIWQ…AGIF), 31 to 51 (LLPI…VLLA), 63 to 83 (GCYV…VGVM), and 93 to 113 (FGPV…VVSW).

This sequence belongs to the UPF0299 family.

The protein resides in the cell inner membrane. The protein is UPF0299 membrane protein YohJ of Salmonella arizonae (strain ATCC BAA-731 / CDC346-86 / RSK2980).